We begin with the raw amino-acid sequence, 120 residues long: MHILDSLDAASLRSDVPEFRAGDNLKVHVNIIEGNRSRVQVFQGFVLGRQGDGVRETFTVRKVSFGVGVERTFPVHSPIIEKIEVVTRGDVRRAKLYYMRDLRGKAAKIKEKRDNAPTKK.

The protein belongs to the bacterial ribosomal protein bL19 family.

This protein is located at the 30S-50S ribosomal subunit interface and may play a role in the structure and function of the aminoacyl-tRNA binding site. This Renibacterium salmoninarum (strain ATCC 33209 / DSM 20767 / JCM 11484 / NBRC 15589 / NCIMB 2235) protein is Large ribosomal subunit protein bL19.